Reading from the N-terminus, the 231-residue chain is RNA pyrophosphohydrolase (231 aa).

Positions Gly6–Thr149 constitute a Nudix hydrolase domain. Positions Gly38–Gly59 match the Nudix box motif. The disordered stretch occupies residues Arg157 to Ala190.

Belongs to the Nudix hydrolase family. RppH subfamily. It depends on a divalent metal cation as a cofactor.

Its function is as follows. Accelerates the degradation of transcripts by removing pyrophosphate from the 5'-end of triphosphorylated RNA, leading to a more labile monophosphorylated state that can stimulate subsequent ribonuclease cleavage. The chain is RNA pyrophosphohydrolase from Paraburkholderia phymatum (strain DSM 17167 / CIP 108236 / LMG 21445 / STM815) (Burkholderia phymatum).